The primary structure comprises 204 residues: Inositol diphosphatase DSP2 (204 aa).

Residues 1–27 (MQLEISPRQRSQQQKEEEGEHQQRAGE) are disordered. Basic and acidic residues predominate over residues 13–27 (QQKEEEGEHQQRAGE). Residues 51–203 (NFAEVNDGIF…SSLMHLTASQ (153 aa)) form the Tyrosine-protein phosphatase domain. The segment at 107 to 119 (FGIDGSKELLVNI) is WPD loop important for active site topology. Residues Asn118, Ile119, and Lys123 each contribute to the 1D-myo-inositol hexakisphosphate site. The active-site Phosphocysteine intermediate is the Cys143.

It belongs to the protein-tyrosine phosphatase family. Atypical dual-specificity phosphatase Siw14-like subfamily. Expressed in roots and young panicles.

Its subcellular location is the cytoplasm. It is found in the nucleus. It carries out the reaction 5-diphospho-1D-myo-inositol 1,2,3,4,6-pentakisphosphate + H2O = 1D-myo-inositol hexakisphosphate + phosphate + H(+). The catalysed reaction is 1,5-bis(diphospho)-1D-myo-inositol 2,3,4,6-tetrakisphosphate + H2O = 1-diphospho-1D-myo-inositol 2,3,4,5,6-pentakisphosphate + phosphate + 2 H(+). It catalyses the reaction 3,5-bis(diphospho)-1D-myo-inositol 1,2,4,6-tetrakisphosphate + H2O = 3-diphospho-1D-myo-inositol 1,2,4,5,6-pentakisphosphate + phosphate + 2 H(+). The enzyme catalyses 6-diphospho-1D-myo-inositol pentakisphosphate + H2O = 1D-myo-inositol hexakisphosphate + phosphate + H(+). In terms of biological role, cleaves the beta-phosphate at the 5-position of soluble inositol pyrophosphates. Has highest activity on 5-diphosphoinositol 1,2,3,4,6-pentakisphosphate (5-InsP(7)). Acts as a negative regulator of defense responses against the fungal pathogen Magnaporthe oryzae. The protein is Inositol diphosphatase DSP2 of Oryza sativa subsp. japonica (Rice).